Reading from the N-terminus, the 437-residue chain is MPKKVWKSSTPSTYEHISSLRPKFVSRVDNVLHQRKSLTFSNVVVPDKKNNTLTSSVIYSQGSDIYEIDFAVPLQEAASEPVKDYGDAFEGIENTSLSPKFVYQGETVSKMAYLDKTGETTLLSMSKNGSLAWFKEGIKVPIHIVQELMGPATSYASIHSLTRPGDLPEKDFSLAISDFGISNDTETIVKSQSNGDEEDSILKIIDNAGKPGEILRTVHVPGTTVTHTVRFFDNHIFASCSDDNILRFWDTRTSDKPIWVLGEPKNGKLTSFDCSQVSNNLFVTGFSTGIIKLWDARAAEAATTDLTYRQNGEDPIQNEIANFYHAGGDSVVDVQFSATSSSEFFTVGGTGNIYHWNTDYSLSKYNPDDTIAPPQDATEESQTKSLRFLHKGGSRRSPKQIGRRNTAAWHPVIENLVGTVDDDSLVSIYKPYTEESE.

One copy of the WD 1 repeat lies at 103-144 (YQGETVSKMAYLDKTGETTLLSMSKNGSLAWFKEGIKVPIHI). Thr187 carries the post-translational modification Phosphothreonine. A Phosphoserine modification is found at Ser200. WD repeat units lie at residues 221 to 259 (PGTT…KPIW), 264 to 304 (PKNG…AATT), and 326 to 366 (AGGD…SKYN). The disordered stretch occupies residues 368–404 (DDTIAPPQDATEESQTKSLRFLHKGGSRRSPKQIGRR). A Phosphothreonine modification is found at Thr370. Positions 387–402 (RFLHKGGSRRSPKQIG) are enriched in basic residues. A Phosphothreonine modification is found at Thr406.

In terms of assembly, interacts with KAP122.

The protein resides in the cytoplasm. It localises to the nucleus. Its function is as follows. Transcriptional modulator with roles in meiotic regulation and silencing. Acts either as an adapter to facilitate nuclear import by KAP122 of the RNR2-RNR4 heterodimer, also called beta-beta' subunit, which corresponds to the small subunit of the ribonucleotide reductase (RNR); or as an anchor to retain RNR2-RNR4 in the nucleus. This Saccharomyces cerevisiae (strain ATCC 204508 / S288c) (Baker's yeast) protein is Transcriptional modulator WTM1 (WTM1).